A 52-amino-acid polypeptide reads, in one-letter code: UPF0181 protein NTHI1697 (52 aa).

This sequence belongs to the UPF0181 family.

The protein is UPF0181 protein NTHI1697 of Haemophilus influenzae (strain 86-028NP).